The sequence spans 307 residues: L-lactate dehydrogenase (307 aa).

NAD(+) contacts are provided by residues Val-13, Asp-34, Arg-39, Tyr-64, and 78–79 (GV). Arg-87 is a substrate binding site. Residue Ser-100 coordinates NAD(+). 119–122 (NPVD) is a binding site for substrate. Thr-142 contacts NAD(+). A substrate-binding site is contributed by 147–150 (DSAR). The active-site Proton acceptor is His-174. A substrate-binding site is contributed by Thr-224.

Belongs to the LDH/MDH superfamily. LDH family. Homotetramer.

It localises to the cytoplasm. The catalysed reaction is (S)-lactate + NAD(+) = pyruvate + NADH + H(+). It functions in the pathway fermentation; pyruvate fermentation to lactate; (S)-lactate from pyruvate: step 1/1. Its function is as follows. Catalyzes the conversion of lactate to pyruvate. This is L-lactate dehydrogenase from Lactobacillus delbrueckii subsp. bulgaricus (strain ATCC BAA-365 / Lb-18).